The chain runs to 434 residues: 3-phosphoshikimate 1-carboxyvinyltransferase (434 aa).

3-phosphoshikimate contacts are provided by Lys-22, Ser-23, and Arg-27. Position 22 (Lys-22) interacts with phosphoenolpyruvate. The phosphoenolpyruvate site is built by Gly-93 and Arg-121. 3-phosphoshikimate-binding residues include Ser-168, Ser-169, Gln-170, Ser-199, Asp-320, and Lys-347. Gln-170 is a binding site for phosphoenolpyruvate. Asp-320 serves as the catalytic Proton acceptor. Phosphoenolpyruvate-binding residues include Arg-351, Arg-394, and Lys-419.

This sequence belongs to the EPSP synthase family. As to quaternary structure, monomer.

The protein resides in the cytoplasm. The catalysed reaction is 3-phosphoshikimate + phosphoenolpyruvate = 5-O-(1-carboxyvinyl)-3-phosphoshikimate + phosphate. It participates in metabolic intermediate biosynthesis; chorismate biosynthesis; chorismate from D-erythrose 4-phosphate and phosphoenolpyruvate: step 6/7. Its function is as follows. Catalyzes the transfer of the enolpyruvyl moiety of phosphoenolpyruvate (PEP) to the 5-hydroxyl of shikimate-3-phosphate (S3P) to produce enolpyruvyl shikimate-3-phosphate and inorganic phosphate. The polypeptide is 3-phosphoshikimate 1-carboxyvinyltransferase (Burkholderia cenocepacia (strain ATCC BAA-245 / DSM 16553 / LMG 16656 / NCTC 13227 / J2315 / CF5610) (Burkholderia cepacia (strain J2315))).